We begin with the raw amino-acid sequence, 341 residues long: Anthranilate phosphoribosyltransferase (341 aa).

Residues G79, 82–83 (GD), T87, 89–92 (NIST), 107–115 (KHGNRAASS), and A119 each bind 5-phospho-alpha-D-ribose 1-diphosphate. G79 contributes to the anthranilate binding site. S91 contacts Mg(2+). N110 contacts anthranilate. R165 serves as a coordination point for anthranilate. Mg(2+)-binding residues include D224 and E225.

It belongs to the anthranilate phosphoribosyltransferase family. As to quaternary structure, homodimer. Mg(2+) is required as a cofactor.

It catalyses the reaction N-(5-phospho-beta-D-ribosyl)anthranilate + diphosphate = 5-phospho-alpha-D-ribose 1-diphosphate + anthranilate. Its pathway is amino-acid biosynthesis; L-tryptophan biosynthesis; L-tryptophan from chorismate: step 2/5. Its function is as follows. Catalyzes the transfer of the phosphoribosyl group of 5-phosphorylribose-1-pyrophosphate (PRPP) to anthranilate to yield N-(5'-phosphoribosyl)-anthranilate (PRA). The protein is Anthranilate phosphoribosyltransferase of Lacticaseibacillus casei (strain BL23) (Lactobacillus casei).